The chain runs to 251 residues: uncharacterized protein (251 aa).

To M.jannaschii MJ0638 and MJ1123 and M.tuberculosis Rv2003c.

This is an uncharacterized protein from Methanocaldococcus jannaschii (strain ATCC 43067 / DSM 2661 / JAL-1 / JCM 10045 / NBRC 100440) (Methanococcus jannaschii).